The sequence spans 21 residues: Putative pancreatic polypeptide 2 (21 aa).

This sequence belongs to the NPY family.

In Homo sapiens (Human), this protein is Putative pancreatic polypeptide 2 (PPY2P).